A 37-amino-acid polypeptide reads, in one-letter code: Large ribosomal subunit protein bL36 (37 aa).

Belongs to the bacterial ribosomal protein bL36 family.

This chain is Large ribosomal subunit protein bL36, found in Desulforamulus reducens (strain ATCC BAA-1160 / DSM 100696 / MI-1) (Desulfotomaculum reducens).